The primary structure comprises 156 residues: Transcriptional regulator MraZ (156 aa).

SpoVT-AbrB domains are found at residues 7-54 (NIEV…PESV) and 84-127 (VEVV…AKER).

It belongs to the MraZ family. In terms of assembly, forms oligomers.

The protein resides in the cytoplasm. The protein localises to the nucleoid. The polypeptide is Transcriptional regulator MraZ (Bacteroides thetaiotaomicron (strain ATCC 29148 / DSM 2079 / JCM 5827 / CCUG 10774 / NCTC 10582 / VPI-5482 / E50)).